The sequence spans 498 residues: Protein WHAT'S THIS FACTOR 1, chloroplastic (498 aa).

The N-terminal 50 residues, 1-50 (MDAKLLLPFPFAPAAATRSPKSLFLGAPLPPPPRPPPFPLRLRPRPAAVV), are a transit peptide targeting the chloroplast. The 329-residue stretch at 59 to 387 (KEAPFDTVIQ…LKEKMRALVA (329 aa)) folds into the PORR domain. Disordered regions lie at residues 397–427 (VGTG…EDEG) and 446–498 (DYEW…RERW). 2 stretches are compositionally biased toward acidic residues: residues 417 to 427 (SDEEYDDEDEG) and 456 to 466 (ENDDSPPDFGD).

It localises to the plastid. The protein localises to the chloroplast. Its function is as follows. RNA-binding protein involved in the chloroplastic group II intron splicing. Binds specific group II introns and promotes their splicing. Functions in the context of a heterodimer with the ribonuclease III domain-containing protein RNC1. The sequence is that of Protein WHAT'S THIS FACTOR 1, chloroplastic from Zea mays (Maize).